The primary structure comprises 255 residues: Aliphatic sulfonates import ATP-binding protein SsuB (255 aa).

In terms of domain architecture, ABC transporter spans 12 to 233; the sequence is LLLNAVSKHY…RLGSVRLAEL (222 aa). Residue 44 to 51 participates in ATP binding; the sequence is GRSGGGKS.

Belongs to the ABC transporter superfamily. Aliphatic sulfonates importer (TC 3.A.1.17.2) family. As to quaternary structure, the complex is composed of two ATP-binding proteins (SsuB), two transmembrane proteins (SsuC) and a solute-binding protein (SsuA).

Its subcellular location is the cell inner membrane. It catalyses the reaction ATP + H2O + aliphatic sulfonate-[sulfonate-binding protein]Side 1 = ADP + phosphate + aliphatic sulfonateSide 2 + [sulfonate-binding protein]Side 1.. Its function is as follows. Part of the ABC transporter complex SsuABC involved in aliphatic sulfonates import. Responsible for energy coupling to the transport system. The polypeptide is Aliphatic sulfonates import ATP-binding protein SsuB (Escherichia coli O6:K15:H31 (strain 536 / UPEC)).